Reading from the N-terminus, the 459-residue chain is Ribulose bisphosphate carboxylase large chain (459 aa).

A propeptide spanning residues 1-2 (MS) is cleaved from the precursor. At proline 3 the chain carries N-acetylproline. The residue at position 14 (lysine 14) is an N6,N6,N6-trimethyllysine. Substrate-binding residues include residue 123 and threonine 173. The active-site Proton acceptor is the lysine 175. Residue lysine 177 coordinates substrate. The Mg(2+) site is built by lysine 201, aspartate 203, and glutamate 204. Lysine 201 carries the post-translational modification N6-carboxylysine. The active-site Proton acceptor is the histidine 294. 3 residues coordinate substrate: arginine 295, histidine 327, and serine 379.

Belongs to the RuBisCO large chain family. Type I subfamily. In terms of assembly, heterohexadecamer of 8 large chains and 8 small chains; disulfide-linked. The disulfide link is formed within the large subunit homodimers. The cofactor is Mg(2+). In terms of processing, the disulfide bond which can form in the large chain dimeric partners within the hexadecamer appears to be associated with oxidative stress and protein turnover.

The protein resides in the plastid. The protein localises to the chloroplast. The catalysed reaction is 2 (2R)-3-phosphoglycerate + 2 H(+) = D-ribulose 1,5-bisphosphate + CO2 + H2O. The enzyme catalyses D-ribulose 1,5-bisphosphate + O2 = 2-phosphoglycolate + (2R)-3-phosphoglycerate + 2 H(+). In terms of biological role, ruBisCO catalyzes two reactions: the carboxylation of D-ribulose 1,5-bisphosphate, the primary event in carbon dioxide fixation, as well as the oxidative fragmentation of the pentose substrate in the photorespiration process. Both reactions occur simultaneously and in competition at the same active site. This Corynocarpus laevigatus (New Zealand laurel) protein is Ribulose bisphosphate carboxylase large chain.